The sequence spans 548 residues: Methyl-accepting chemotaxis protein HlyB (548 aa).

The Cytoplasmic portion of the chain corresponds to 1 to 10 (MIINKFSLKW). A helical membrane pass occupies residues 11–31 (MLAIAVAIPAIALLFVAFTSL). Residues 32-199 (NTMSVMQAQS…SFEAGRTKQM (168 aa)) are Periplasmic-facing. The helical transmembrane segment at 200-220 (VIIAAGLIISFITSLVIITNL) threads the bilayer. The HAMP domain maps to 218–271 (TNLRSRVAYLKDRMSSAAANLSLRTRLELDGNDELCDIGKSFNAFIDKVHHSIE). Over 221–548 (RSRVAYLKDR…LDKLVGSFEL (328 aa)) the chain is Cytoplasmic. The Methyl-accepting transducer domain maps to 276–512 (NSKELATMAS…DINRNVEDIN (237 aa)).

This sequence belongs to the methyl-accepting chemotaxis (MCP) protein family.

It localises to the cell inner membrane. Its function is as follows. Chemotactic-signal transducers respond to changes in the concentration of attractants and repellents in the environment, transduce a signal from the outside to the inside of the cell, and facilitate sensory adaptation through the variation of the level of methylation. This chain is Methyl-accepting chemotaxis protein HlyB (hlyB), found in Vibrio cholerae serotype O1 (strain ATCC 39315 / El Tor Inaba N16961).